The following is a 553-amino-acid chain: Glutamyl-tRNA(Gln) amidotransferase subunit B, mitochondrial (553 aa).

The transit peptide at 1–18 (MAASTSGYSGVLFRLRKY) directs the protein to the mitochondrion.

The protein belongs to the GatB/GatE family. GatB subfamily. Subunit of the heterotrimeric GatCAB amidotransferase (AdT) complex, composed of A (qrsl1), B (gatb) and C (gatc) subunits.

The protein resides in the mitochondrion. The catalysed reaction is L-glutamyl-tRNA(Gln) + L-glutamine + ATP + H2O = L-glutaminyl-tRNA(Gln) + L-glutamate + ADP + phosphate + H(+). Functionally, allows the formation of correctly charged Gln-tRNA(Gln) through the transamidation of misacylated Glu-tRNA(Gln) in the mitochondria. The reaction takes place in the presence of glutamine and ATP through an activated gamma-phospho-Glu-tRNA(Gln). In Danio rerio (Zebrafish), this protein is Glutamyl-tRNA(Gln) amidotransferase subunit B, mitochondrial.